A 660-amino-acid polypeptide reads, in one-letter code: DNA mismatch repair protein MutL (660 aa).

This sequence belongs to the DNA mismatch repair MutL/HexB family.

Functionally, this protein is involved in the repair of mismatches in DNA. It is required for dam-dependent methyl-directed DNA mismatch repair. May act as a 'molecular matchmaker', a protein that promotes the formation of a stable complex between two or more DNA-binding proteins in an ATP-dependent manner without itself being part of a final effector complex. The chain is DNA mismatch repair protein MutL from Streptococcus equi subsp. zooepidemicus (strain MGCS10565).